Reading from the N-terminus, the 170-residue chain is Ubiquitin-conjugating enzyme E2 2 (170 aa).

The region spanning 4–150 is the UBC core domain; it reads PARRRLMRDF…VKETVEKSWE (147 aa). Catalysis depends on Cys88, which acts as the Glycyl thioester intermediate. The tract at residues 148-170 is disordered; the sequence is SWEDDLKDMDDGDDDDDDDDDDD. The span at 152–170 shows a compositional bias: acidic residues; it reads DLKDMDDGDDDDDDDDDDD.

Belongs to the ubiquitin-conjugating enzyme family.

The protein localises to the cytoplasm. It is found in the nucleus. The catalysed reaction is S-ubiquitinyl-[E1 ubiquitin-activating enzyme]-L-cysteine + [E2 ubiquitin-conjugating enzyme]-L-cysteine = [E1 ubiquitin-activating enzyme]-L-cysteine + S-ubiquitinyl-[E2 ubiquitin-conjugating enzyme]-L-cysteine.. It participates in protein modification; protein ubiquitination. Catalyzes the covalent attachment of ubiquitin to other proteins. Plays a role in transcription regulation by catalyzing the monoubiquitination of histone H2B to form H2BK123ub1. H2BK123ub1 gives a specific tag for epigenetic transcriptional activation and is also a prerequisite for H3K4me and H3K79me formation. Also involved in postreplication repair of UV-damaged DNA, in N-end rule-dependent protein degradation and in sporulation. The protein is Ubiquitin-conjugating enzyme E2 2 (UBC2) of Eremothecium gossypii (strain ATCC 10895 / CBS 109.51 / FGSC 9923 / NRRL Y-1056) (Yeast).